Here is a 474-residue protein sequence, read N- to C-terminus: Coronin-1C (474 aa).

WD repeat units follow at residues 78-118, 128-168, 172-202, 215-249, and 263-303; these read GHTG…LTLS, GHSK…ALIN, MHSD…RVID, AHEG…ALWN, and DTSN…PYVH. The stretch at 435–474 forms a coiled coil; it reads VQNEAKLDEILKEIKSIKETICSQDERISKLEQQLAKMAA. Lys446 carries the N6-acetyllysine modification.

This sequence belongs to the WD repeat coronin family. In terms of assembly, homotrimer. Binds F-actin. Interacts with RCC2. Interacts preferentially with nucleotide-free and GDP-bound RAC1. Interacts with VIM (via head domain). Interacts with MICAL2; this interaction recruits MICAL2 to the actin filaments. As to expression, detected in skeletal muscle (at protein level). Detected in fibroblasts (at protein level). Ubiquitous.

It is found in the cell membrane. Its subcellular location is the cell projection. It localises to the lamellipodium. The protein resides in the ruffle membrane. The protein localises to the cytoplasm. It is found in the cytoskeleton. Its subcellular location is the cell cortex. It localises to the endosome membrane. Its function is as follows. Plays a role in directed cell migration by regulating the activation and subcellular location of RAC1. Increases the presence of activated RAC1 at the leading edge of migrating cells. Required for normal organization of the cytoskeleton, including the actin cytoskeleton, microtubules and the vimentin intermediate filaments. Required for normal cell proliferation, cell migration, and normal formation of lamellipodia. Plays a role in endoplasmic reticulum-associated endosome fission: localizes to endosome membrane tubules and promotes recruitment of TMCC1, leading to recruitment of the endoplasmic reticulum to endosome tubules for fission. Endosome membrane fission of early and late endosomes is essential to separate regions destined for lysosomal degradation from carriers to be recycled to the plasma membrane. Required for normal distribution of mitochondria within cells. The chain is Coronin-1C (Coro1c) from Mus musculus (Mouse).